An 82-amino-acid polypeptide reads, in one-letter code: UPF0291 protein PEPE_0871 (82 aa).

This sequence belongs to the UPF0291 family.

The protein resides in the cytoplasm. This Pediococcus pentosaceus (strain ATCC 25745 / CCUG 21536 / LMG 10740 / 183-1w) protein is UPF0291 protein PEPE_0871.